The following is a 121-amino-acid chain: RxLR effector protein PexRD2 (121 aa).

An N-terminal signal peptide occupies residues 1 to 20 (MRLSYVIVVIATSFLVTTEA). A RxLR-dEER motif is present at residues 38 to 56 (RLLRKHYTAAENDDDSEAR). Positions 57 to 121 (ALNTEKMKTM…LNYVAEHTAV (65 aa)) are WY domain.

Belongs to the RxLR effector family. Homodimer. Interacts with host MAPKKK epsilon (via its kinase domain).

The protein localises to the secreted. The protein resides in the host cytoplasm. It is found in the host nucleus. In terms of biological role, effector that enhances P.infestans colonization of Nicotiana benthamiana leaves. Induces a weak Cell death response in N.benthamiana. PexRD2-induced cell death is dependent on SGT1, suggesting that PexRD2 is recognized by the plant immune system. Interacts with the kinase domain of the host MAPKKK epsilon, a positive regulator of cell death associated with plant immunity, and perturbs signaling pathways triggered by MAPKKK epsilon. The protein is RxLR effector protein PexRD2 of Phytophthora infestans (strain T30-4) (Potato late blight agent).